Consider the following 63-residue polypeptide: Large ribosomal subunit protein uL29 (63 aa).

This sequence belongs to the universal ribosomal protein uL29 family.

The chain is Large ribosomal subunit protein uL29 from Proteus mirabilis (strain HI4320).